Here is a 242-residue protein sequence, read N- to C-terminus: tRNA uridine(34) hydroxylase (242 aa).

In terms of domain architecture, Rhodanese spans 128 to 222; it reads DGREVVMLDT…YFEETGGPGY (95 aa). The Cysteine persulfide intermediate role is filled by C182.

This sequence belongs to the TrhO family.

The catalysed reaction is uridine(34) in tRNA + AH2 + O2 = 5-hydroxyuridine(34) in tRNA + A + H2O. In terms of biological role, catalyzes oxygen-dependent 5-hydroxyuridine (ho5U) modification at position 34 in tRNAs. This chain is tRNA uridine(34) hydroxylase, found in Bordetella avium (strain 197N).